The chain runs to 1060 residues: Carbamoyl phosphate synthase large chain (1060 aa).

The carboxyphosphate synthetic domain stretch occupies residues 1 to 401 (MPKRQDIHKI…SLLKAVRSLE (401 aa)). The ATP site is built by R129, R169, G175, G176, R208, I210, E215, G241, V242, H243, Q284, and E298. Residues 133–327 (KNLMQKLHEP…IAKMAAKIAV (195 aa)) form the ATP-grasp 1 domain. The Mg(2+) site is built by Q284, E298, and N300. Residues Q284, E298, and N300 each coordinate Mn(2+). Positions 402–546 (VGLIHPERPA…YSTYESSTES (145 aa)) are oligomerization domain. The interval 547 to 929 (VKSDKPSVLV…ALYKAFEAAG (383 aa)) is carbamoyl phosphate synthetic domain. One can recognise an ATP-grasp 2 domain in the interval 671–861 (DQVIKSLKLP…LAQVATLAIL (191 aa)). Residues R707, H746, L748, E752, G777, I778, H779, S780, Q820, and E832 each contribute to the ATP site. 3 residues coordinate Mg(2+): Q820, E832, and N834. Mn(2+) is bound by residues Q820, E832, and N834. The MGS-like domain occupies 930 to 1060 (MHLPQFGRAL…QAFSISPIKS (131 aa)). Residues 930-1060 (MHLPQFGRAL…QAFSISPIKS (131 aa)) form an allosteric domain region.

The protein belongs to the CarB family. Composed of two chains; the small (or glutamine) chain promotes the hydrolysis of glutamine to ammonia, which is used by the large (or ammonia) chain to synthesize carbamoyl phosphate. Tetramer of heterodimers (alpha,beta)4. Mg(2+) serves as cofactor. Requires Mn(2+) as cofactor.

The enzyme catalyses hydrogencarbonate + L-glutamine + 2 ATP + H2O = carbamoyl phosphate + L-glutamate + 2 ADP + phosphate + 2 H(+). It carries out the reaction hydrogencarbonate + NH4(+) + 2 ATP = carbamoyl phosphate + 2 ADP + phosphate + 2 H(+). Its pathway is amino-acid biosynthesis; L-arginine biosynthesis; carbamoyl phosphate from bicarbonate: step 1/1. The protein operates within pyrimidine metabolism; UMP biosynthesis via de novo pathway; (S)-dihydroorotate from bicarbonate: step 1/3. Large subunit of the glutamine-dependent carbamoyl phosphate synthetase (CPSase). CPSase catalyzes the formation of carbamoyl phosphate from the ammonia moiety of glutamine, carbonate, and phosphate donated by ATP, constituting the first step of 2 biosynthetic pathways, one leading to arginine and/or urea and the other to pyrimidine nucleotides. The large subunit (synthetase) binds the substrates ammonia (free or transferred from glutamine from the small subunit), hydrogencarbonate and ATP and carries out an ATP-coupled ligase reaction, activating hydrogencarbonate by forming carboxy phosphate which reacts with ammonia to form carbamoyl phosphate. The chain is Carbamoyl phosphate synthase large chain from Lacticaseibacillus paracasei (strain ATCC 334 / BCRC 17002 / CCUG 31169 / CIP 107868 / KCTC 3260 / NRRL B-441) (Lactobacillus paracasei).